A 474-amino-acid chain; its full sequence is MKKQLDKITPRNIDFSQWYTDIVLNTKLASYGPVKGTMIFRPYGYRIWELIQKYLDEEFKKVNVDNVYFPLLIPESLFNKEKDHIEGFSPEIATVTRVGQKKLEENLFIRPTSEVVMMDYFSNEINSYRDLPLIYNQWCNVMRWEKTTRPFLRTSEFLWQEGHTIHSSYNEAENFCLKILNIYEKFAKEILLLPVICGKKTEKEKFAGAKDTYTIESLMFDGQALQCGTSHFFADNFTKVYDIKFQNKENKLEHAYSTSWGVSTRLIGALIMTHSDDNGLVLPSKISPIQIQIIQIKNTEQIDQVVENIKDKLSDYRIDVDNSDKSFGFKISEAEIKGIPIRIEIGPRDLENNQITISRRDQQENKIKIDYKDVKKVVDQMIKDYDLSLYNSALENRKNRTFKANTIEEYIEILKQNQGFVLVPFCGRVECEQDIKTKTATNSRCIPFDQKEVKAKCFNCKKDTCLQVIFARAY.

Belongs to the class-II aminoacyl-tRNA synthetase family. ProS type 3 subfamily. In terms of assembly, homodimer.

The protein resides in the cytoplasm. It carries out the reaction tRNA(Pro) + L-proline + ATP = L-prolyl-tRNA(Pro) + AMP + diphosphate. In terms of biological role, catalyzes the attachment of proline to tRNA(Pro) in a two-step reaction: proline is first activated by ATP to form Pro-AMP and then transferred to the acceptor end of tRNA(Pro). This Mycoplasma mycoides subsp. mycoides SC (strain CCUG 32753 / NCTC 10114 / PG1) protein is Proline--tRNA ligase.